A 493-amino-acid polypeptide reads, in one-letter code: Isoniazid-induced protein IniC (493 aa).

The protein is Isoniazid-induced protein IniC (iniC) of Mycobacterium tuberculosis (strain CDC 1551 / Oshkosh).